The primary structure comprises 143 residues: Flagellar assembly factor FliW (143 aa).

It belongs to the FliW family. As to quaternary structure, interacts with translational regulator CsrA and flagellin(s).

It is found in the cytoplasm. Acts as an anti-CsrA protein, binds CsrA and prevents it from repressing translation of its target genes, one of which is flagellin. Binds to flagellin and participates in the assembly of the flagellum. The polypeptide is Flagellar assembly factor FliW (Clostridium botulinum (strain 657 / Type Ba4)).